The chain runs to 366 residues: Flagellar P-ring protein (366 aa).

An N-terminal signal peptide occupies residues 1-20 (MVIKFLSALILLLVTTAAQA).

This sequence belongs to the FlgI family. As to quaternary structure, the basal body constitutes a major portion of the flagellar organelle and consists of four rings (L,P,S, and M) mounted on a central rod.

The protein localises to the periplasm. It is found in the bacterial flagellum basal body. Functionally, assembles around the rod to form the L-ring and probably protects the motor/basal body from shearing forces during rotation. The chain is Flagellar P-ring protein from Escherichia coli O1:K1 / APEC.